Consider the following 304-residue polypeptide: Ornithine carbamoyltransferase (304 aa).

Carbamoyl phosphate is bound by residues 53–56 (STRT), Q80, R104, and 131–134 (HPCQ). Residues N162, D222, and 226–227 (SM) contribute to the L-ornithine site. Carbamoyl phosphate is bound by residues 261–262 (CL) and R289.

This sequence belongs to the aspartate/ornithine carbamoyltransferase superfamily. OTCase family.

The protein localises to the cytoplasm. It carries out the reaction carbamoyl phosphate + L-ornithine = L-citrulline + phosphate + H(+). Its pathway is amino-acid biosynthesis; L-arginine biosynthesis; L-arginine from L-ornithine and carbamoyl phosphate: step 1/3. Functionally, reversibly catalyzes the transfer of the carbamoyl group from carbamoyl phosphate (CP) to the N(epsilon) atom of ornithine (ORN) to produce L-citrulline. The chain is Ornithine carbamoyltransferase from Rhizobium johnstonii (strain DSM 114642 / LMG 32736 / 3841) (Rhizobium leguminosarum bv. viciae).